The chain runs to 444 residues: Cadaverine/lysine antiporter (444 aa).

Transmembrane regions (helical) follow at residues 7-27 (IGLF…GIAL), 35-55 (IGGI…SLAY), 95-115 (IGNL…FPVL), 123-143 (IACI…GTWV), 149-169 (IGLV…WHWF), 193-213 (ILLC…TGMV), 222-242 (LATM…TQVL), 273-293 (LVSA…MMLV), 323-343 (LLLA…MNSA), 354-374 (LTGI…VDLI), 384-404 (FVSL…LMGA), and 405-425 (SSFE…FYAR).

This sequence belongs to the amino acid-polyamine-organocation (APC) superfamily. Basic amino acid/polyamine antiporter (APA) (TC 2.A.3.2) family.

The protein localises to the cell inner membrane. It carries out the reaction cadaverine(in) + L-lysine(out) = cadaverine(out) + L-lysine(in). Its function is as follows. Under acidic conditions, in the presence of lysine, functions as a cadaverine:lysine antiporter that facilitates the excretion of cadaverine and the uptake of lysine. The sequence is that of Cadaverine/lysine antiporter (cadB) from Escherichia coli O157:H7.